The following is a 95-amino-acid chain: Large ribosomal subunit protein bL25 (95 aa).

Belongs to the bacterial ribosomal protein bL25 family. As to quaternary structure, part of the 50S ribosomal subunit; part of the 5S rRNA/L5/L18/L25 subcomplex. Contacts the 5S rRNA. Binds to the 5S rRNA independently of L5 and L18.

In terms of biological role, this is one of the proteins that binds to the 5S RNA in the ribosome where it forms part of the central protuberance. This Shewanella halifaxensis (strain HAW-EB4) protein is Large ribosomal subunit protein bL25.